We begin with the raw amino-acid sequence, 206 residues long: Ras-related protein Rab7 (206 aa).

GTP is bound by residues 15 to 22 (GDTGVGKT), 63 to 67 (DTAGQ), and 125 to 128 (NKID). 2 S-geranylgeranyl cysteine lipidation sites follow: cysteine 204 and cysteine 206. The residue at position 206 (cysteine 206) is a Cysteine methyl ester.

The protein belongs to the small GTPase superfamily. Rab family.

It localises to the cell membrane. Its function is as follows. Protein transport. Probably involved in vesicular traffic. This Vigna aconitifolia (Moth bean) protein is Ras-related protein Rab7.